Here is a 682-residue protein sequence, read N- to C-terminus: Transcription activator of gluconeogenesis PODANS_4_8760 (682 aa).

The segment at 1-72 is disordered; that stretch reads MPEDGGPFGS…KDPLRPRRKK (72 aa). Residues 9-21 show a composition bias toward low complexity; that stretch reads GSEAAEASGAMSE. Composition is skewed to basic and acidic residues over residues 29–41 and 54–67; these read HEPH…DRMS and GEVK…DPLR. Residues 77 to 105 constitute a DNA-binding region (zn(2)-C6 fungal-type); the sequence is CYACQRAHLTCGDERPCQRCIKRGLQDSC. Disordered stretches follow at residues 122-148, 181-211, 325-375, 509-541, and 586-622; these read EALR…RHHS, LTES…SGMV, PAGP…RPSK, NRNT…AASG, and TDKP…HSIL. Polar residues-rich tracts occupy residues 185 to 206, 329 to 345, and 354 to 373; these read LPFN…SNPP, TSLQ…QPTT, and PTMS…NSRP.

It belongs to the ERT1/acuK family.

Its subcellular location is the nucleus. Functionally, transcription factor which regulates nonfermentable carbon utilization. Activator of gluconeogenetic genes. In Podospora anserina (strain S / ATCC MYA-4624 / DSM 980 / FGSC 10383) (Pleurage anserina), this protein is Transcription activator of gluconeogenesis PODANS_4_8760.